A 715-amino-acid chain; its full sequence is Fatty acid oxidation complex subunit alpha (715 aa).

The segment at 1–190 (MIYEGKAITV…KVSAVDAVVT (190 aa)) is enoyl-CoA hydratase/isomerase. Asp297 serves as a coordination point for substrate. Positions 312–715 (KDVKQAAVLG…MAKNGQSFFG (404 aa)) are 3-hydroxyacyl-CoA dehydrogenase. Residues Met325, Asp344, 401-403 (VVE), Lys408, and Ser430 each bind NAD(+). His451 acts as the For 3-hydroxyacyl-CoA dehydrogenase activity in catalysis. Asn454 is a binding site for NAD(+). Residues Asn501 and Tyr660 each contribute to the substrate site.

In the N-terminal section; belongs to the enoyl-CoA hydratase/isomerase family. The protein in the C-terminal section; belongs to the 3-hydroxyacyl-CoA dehydrogenase family. As to quaternary structure, heterotetramer of two alpha chains (FadB) and two beta chains (FadA).

The catalysed reaction is a (3S)-3-hydroxyacyl-CoA + NAD(+) = a 3-oxoacyl-CoA + NADH + H(+). The enzyme catalyses a (3S)-3-hydroxyacyl-CoA = a (2E)-enoyl-CoA + H2O. It carries out the reaction a 4-saturated-(3S)-3-hydroxyacyl-CoA = a (3E)-enoyl-CoA + H2O. It catalyses the reaction (3S)-3-hydroxybutanoyl-CoA = (3R)-3-hydroxybutanoyl-CoA. The catalysed reaction is a (3Z)-enoyl-CoA = a 4-saturated (2E)-enoyl-CoA. The enzyme catalyses a (3E)-enoyl-CoA = a 4-saturated (2E)-enoyl-CoA. It participates in lipid metabolism; fatty acid beta-oxidation. Functionally, involved in the aerobic and anaerobic degradation of long-chain fatty acids via beta-oxidation cycle. Catalyzes the formation of 3-oxoacyl-CoA from enoyl-CoA via L-3-hydroxyacyl-CoA. It can also use D-3-hydroxyacyl-CoA and cis-3-enoyl-CoA as substrate. The protein is Fatty acid oxidation complex subunit alpha of Pseudomonas fragi.